Reading from the N-terminus, the 170-residue chain is Large ribosomal subunit protein uL11 (170 aa).

Belongs to the universal ribosomal protein uL11 family. Part of the ribosomal stalk of the 50S ribosomal subunit. Interacts with L10 and the large rRNA to form the base of the stalk. L10 forms an elongated spine to which L12 dimers bind in a sequential fashion forming a multimeric L10(L12)X complex.

In terms of biological role, forms part of the ribosomal stalk which helps the ribosome interact with GTP-bound translation factors. This chain is Large ribosomal subunit protein uL11, found in Saccharolobus islandicus (strain M.14.25 / Kamchatka #1) (Sulfolobus islandicus).